We begin with the raw amino-acid sequence, 315 residues long: Olfactory receptor 4A5 (315 aa).

At 1–23 (MRQNNNITEFVLLGFSQDPGVQK) the chain is on the extracellular side. N6 carries an N-linked (GlcNAc...) asparagine glycan. Residues 24–47 (ALFVMFLLTYLVTVVGNLLIVVDI) form a helical membrane-spanning segment. The Cytoplasmic portion of the chain corresponds to 48-55 (IASPSLGS). Residues 56–77 (PMYFFLACLSFIDAAYSTTISP) form a helical membrane-spanning segment. Topologically, residues 78 to 98 (KLIVGLFCDKKTISFQGCMGQ) are extracellular. A disulfide bridge links C95 with C186. The helical transmembrane segment at 99 to 118 (LFIDHFFGGAEVFLLVVMAC) threads the bilayer. At 119–137 (DRYVAICKPLHYLTIMNRQ) the chain is on the cytoplasmic side. A helical transmembrane segment spans residues 138–156 (VCFLLLVVAMIGGFVHSAF). The Extracellular segment spans residues 157-192 (QIVVYSLPFCGPNVIVHFSCDMHPLLELACTDTYFI). A helical membrane pass occupies residues 193-216 (GLTVVVNSGAICMVIFNLLLISYG). Over 217-232 (VILSSLKTYSQEKRGK) the chain is Cytoplasmic. The chain crosses the membrane as a helical span at residues 233-255 (ALSTCSSGSTVVVLFFVPCIFIY). Topologically, residues 256–266 (VRPVSNFPTDK) are extracellular. Residues 267–286 (FMTVFYTIITHMLSPLIYTL) traverse the membrane as a helical segment. Residues 287 to 315 (RNSEMRNAIEKLLGKKLTIFIIGGVSVLM) lie on the Cytoplasmic side of the membrane.

This sequence belongs to the G-protein coupled receptor 1 family.

It is found in the cell membrane. Odorant receptor. The sequence is that of Olfactory receptor 4A5 (OR4A5) from Homo sapiens (Human).